A 752-amino-acid polypeptide reads, in one-letter code: Probable cell surface ferric reductase kap2 (752 aa).

The chain crosses the membrane as a helical span at residues 40 to 60 (GKYGLGWVYFSVILLAISTII). Asn118 and Asn133 each carry an N-linked (GlcNAc...) asparagine glycan. The next 2 membrane-spanning stretches (helical) occupy residues 157–177 (IGFPSLGASSIILAALIFVTL) and 195–215 (PPLAIRAGMIAVAMIPWIIAL). The 148-residue stretch at 201–348 (AGMIAVAMIP…WATVAIWMLS (148 aa)) folds into the Ferric oxidoreductase domain. His237 and His251 together coordinate heme. The next 3 helical transmembrane spans lie at 241 to 261 (GYLCLFLSLIHMVPFYVTPIW), 281 to 301 (GTGWAALVPLIVLCLHSLPIL), and 306 to 326 (YELFKLVHLPLSIIFLAMIFW). 2 residues coordinate heme: His313 and His327. The helical transmembrane segment at 331 to 351 (FLASWDYLWATVAIWMLSYAV) threads the bilayer. Positions 349 to 475 (YAVRLFYVNW…EGPYGGMKRD (127 aa)) constitute an FAD-binding FR-type domain. Asn357 carries an N-linked (GlcNAc...) asparagine glycan. 467–470 (GPYG) is an NADP(+) binding site. The chain crosses the membrane as a helical span at residues 482–502 (VVFFAGGSGITATASHLLNLI). Asn627 carries N-linked (GlcNAc...) asparagine glycosylation. An NADP(+)-binding site is contributed by 714-715 (CG).

It belongs to the ferric reductase (FRE) family. The cofactor is FAD. Heme is required as a cofactor.

Its subcellular location is the cell membrane. It carries out the reaction 2 a Fe(II)-siderophore + NADP(+) + H(+) = 2 a Fe(III)-siderophore + NADPH. Its function is as follows. Probable cell surface ferric reductase that acts as a negative regulatory factor of growth and development. Involved in kojic acid production through the regulation of kojA expression. The protein is Probable cell surface ferric reductase kap2 of Aspergillus oryzae (strain ATCC 42149 / RIB 40) (Yellow koji mold).